The primary structure comprises 286 residues: Protease HtpX homolog (286 aa).

The next 2 helical transmembrane spans lie at 6-26 and 28-48; these read TCFLMVVLMLLFVFVGGYVGG and QGMIIAFLVALGMNFFSYFFS. Histidine 130 contributes to the Zn(2+) binding site. Glutamate 131 is a catalytic residue. Histidine 134 contacts Zn(2+). Transmembrane regions (helical) follow at residues 140-160 and 178-198; these read ILTGSIAAVMAGAIAMLANFA and AIMLIIALIMPLAATIIQMAI. A Zn(2+)-binding site is contributed by glutamate 203.

This sequence belongs to the peptidase M48B family. Requires Zn(2+) as cofactor.

The protein resides in the cell inner membrane. The sequence is that of Protease HtpX homolog from Campylobacter curvus (strain 525.92).